A 1984-amino-acid chain; its full sequence is Sodium channel protein type 9 subunit alpha (1984 aa).

Over 1–125 the chain is Cytoplasmic; sequence MAMLPPPGPQ…RRISIKILVH (125 aa). Basic and acidic residues predominate over residues 26 to 47; that stretch reads RIAEGKTKEPKEEKKDDHDEGP. The tract at residues 26 to 55 is disordered; it reads RIAEGKTKEPKEEKKDDHDEGPKPSSDLEA. The I repeat unit spans residues 112-408; the sequence is FSPLRRISIK…VAMAYEEQNQ (297 aa). The helical transmembrane segment at 126–145 threads the bilayer; that stretch reads SLFSMLIMCTILTNCIFMTM. Residues 146–150 are Extracellular-facing; the sequence is NNPAE. The helical transmembrane segment at 151 to 172 threads the bilayer; sequence WTKNVEYTFTGIYTFESLVKIF. Over 173–185 the chain is Cytoplasmic; the sequence is ARGFCVGEFTFLR. Residues 186–204 traverse the membrane as a helical segment; the sequence is DPWNWLDFIVIVFAYLTEF. Topologically, residues 205-210 are extracellular; that stretch reads VNLGNV. N-linked (GlcNAc...) asparagine glycosylation occurs at Asn-209. A helical membrane pass occupies residues 211-227; that stretch reads SALRTFRVLRALKTISV. The Cytoplasmic segment spans residues 228–241; that stretch reads IPGLKTIVGALIQS. The helical transmembrane segment at 242–267 threads the bilayer; sequence VKKLSDVIILTVFCLSVFALIGLQLF. The Extracellular portion of the chain corresponds to 268-344; sequence MGHLKHKCLR…PDYGYTSFDT (77 aa). Residues Cys-275 and Cys-322 are joined by a disulfide bond. Asn-281 carries N-linked (GlcNAc...) asparagine glycosylation. Positions 345–361 form an intramembrane region, pore-forming; it reads FSWAFLALFRLMTQDYW. The Extracellular segment spans residues 362–374; sequence ENLYQQTLRAAGK. The chain crosses the membrane as a helical span at residues 375–400; that stretch reads TYMIFFVVVIFLGSFYLINLILAVVA. At 401-742 the chain is on the cytoplasmic side; that stretch reads MAYEEQNQAN…FIYIIVMDPF (342 aa). Over residues 459-469 the composition is skewed to low complexity; it reads SSSETSKLSSK. Disordered stretches follow at residues 459–517 and 563–610; these read SSSE…LGVE and GSET…PPML. The segment covering 472 to 484 has biased composition (basic residues); it reads KERRNRRKKKNQK. 2 stretches are compositionally biased toward basic and acidic residues: residues 487 to 508 and 571 to 583; these read SSGE…ESIS and DEHS…ESRR. An II repeat occupies 723-986; the sequence is CSPFWIKFKK…EEDTDANNLQ (264 aa). A helical transmembrane segment spans residues 743–759; the sequence is VDLAITICIVLNTLFMA. At 760–768 the chain is on the extracellular side; it reads MEHHPMTEE. Residues 769–793 form a helical membrane-spanning segment; sequence FKNVLVVGNLVFTGIFAAEMVLKLI. At 794-802 the chain is on the cytoplasmic side; the sequence is AMDPYEYFQ. A helical transmembrane segment spans residues 803–819; that stretch reads VGWNVFDSLIVTLSLVE. The Extracellular portion of the chain corresponds to 820 to 828; sequence LFLADVEGL. Residues 829-845 traverse the membrane as a helical segment; it reads SVLRSFRLLRVFKLAKS. Residues 846 to 862 are Cytoplasmic-facing; sequence WPTLNMLIKIIGNSVGP. The helical transmembrane segment at 863 to 885 threads the bilayer; the sequence is LGNLTLVLAIIVFIFAVVGMQLF. Residues 886–912 are Extracellular-facing; it reads GKSYKECVCKINDDCSLPRWHMNDFFH. The cysteines at positions 894 and 900 are disulfide-linked. An intramembrane region (pore-forming) is located at residues 913-925; that stretch reads SFLIVFRVLCGEW. Residues 926 to 937 lie on the Extracellular side of the membrane; that stretch reads IETMWDCMEVAG. A disulfide bond links Cys-932 and Cys-941. Residues 938–964 form a helical membrane-spanning segment; it reads QAMCLIVYMMVMVIGNLVVLNLFLALL. Topologically, residues 965–1184 are cytoplasmic; the sequence is LSSFSSDNLS…WWNIRKTCYR (220 aa). The disordered stretch occupies residues 1087 to 1146; that stretch reads PIAPGESDLENMNTEELSSDSESEYSKERLNRSSSSECSTVDNALPGEGEEAEAEPVNSD. Over residues 1118–1128 the composition is skewed to polar residues; the sequence is RSSSSECSTVD. Over residues 1134–1146 the composition is skewed to acidic residues; it reads EGEEAEAEPVNSD. The III repeat unit spans residues 1177 to 1485; it reads NIRKTCYRIV…KKYYNAMKKL (309 aa). Residues 1185–1209 form a helical membrane-spanning segment; the sequence is IVEHSWFESFIVLMILLSSGALAFE. The Extracellular segment spans residues 1210–1221; it reads DIYIEKKKTIKI. Residues 1222 to 1247 form a helical membrane-spanning segment; sequence ILEYADKIFTYIFILEMLLKWVAYGY. The Cytoplasmic segment spans residues 1248–1249; that stretch reads KT. Residues 1250-1275 form a helical membrane-spanning segment; it reads YFTNAWCWLDFLIVDVSLVTLVANTL. Topologically, residues 1276 to 1284 are extracellular; that stretch reads GYSDLGPIK. Residues 1285–1301 form a helical membrane-spanning segment; the sequence is SLRTLRALRPLRALSRF. Residues 1302–1314 are Cytoplasmic-facing; the sequence is EGMRVVVNALIGA. A helical transmembrane segment spans residues 1315–1339; the sequence is IPSIMNVLLVCLIFWLIFSIMGVNL. Residues 1340-1391 lie on the Extracellular side of the membrane; it reads FAGKFYQCVNTTDDSRFPTKQVSNRSECFALMNGSQNVRWKNLKVNFDNVGL. An intrachain disulfide couples Cys-1347 to Cys-1367. Residues Asn-1349, Asn-1363, and Asn-1372 are each glycosylated (N-linked (GlcNAc...) asparagine). Positions 1392 to 1402 form an intramembrane region, pore-forming; that stretch reads RYLSLLQVATF. Topologically, residues 1403–1428 are extracellular; sequence KGWMDIMYAAVDSVNVDQQPSYEHNL. A helical transmembrane segment spans residues 1429–1454; it reads YMYIYFVIFIIFGSFFTLNLFIGVII. Residues 1455–1511 lie on the Cytoplasmic side of the membrane; sequence DNFNQQKKKLGGQDIFMTEEQKKYYNAMKKLGSKKPQKPIPRPGNKFQGCIFDLVTN. Ser-1487 bears the Phosphoserine; by PKC mark. An IV repeat occupies 1494-1792; that stretch reads IPRPGNKFQG…WEKFDPDATQ (299 aa). A helical transmembrane segment spans residues 1512–1531; sequence QAFDITIMILICLNMVTMMV. Residues 1532 to 1542 are Extracellular-facing; that stretch reads EKEGQSDYMTD. Residues 1543 to 1564 form a helical membrane-spanning segment; sequence VLYWINVVFIILFTGECVLKLI. The Cytoplasmic portion of the chain corresponds to 1565–1573; it reads SLRHYYFTI. A helical transmembrane segment spans residues 1574–1595; sequence GWNIFDFVVVILSIVGMFLAEL. Topologically, residues 1596–1604 are extracellular; sequence IETYFVSPT. The chain crosses the membrane as a helical span at residues 1605 to 1624; sequence LFRVIRLARIGRILRLIKGA. Residues 1625-1637 lie on the Cytoplasmic side of the membrane; the sequence is KGIRTLLFALMMS. Residues 1638–1660 form a helical membrane-spanning segment; sequence LPALFNIGLLLFLVMFIYAIFGM. At 1661 to 1683 the chain is on the extracellular side; sequence SNFAYVKKEAGINDMFNFETFGN. The pore-forming intramembrane region spans 1684–1696; it reads SMICLFQITTSAG. At 1697–1730 the chain is on the extracellular side; sequence WDGLLAPILNSAPPDCDPKKVHPGSSTEGDCGSP. Residues Cys-1712 and Cys-1727 are joined by a disulfide bond. The helical transmembrane segment at 1731–1756 threads the bilayer; sequence SVGIFYFVSYIIISFLVVVNMYIAVI. Residues 1757–1984 are Cytoplasmic-facing; it reads LENFSVATEE…KGKDGKETKK (228 aa). The region spanning 1886 to 1915 is the IQ domain; sequence EDVSATVIQRAYRRYRLRQNVKNISSIYIK. Residues 1924-1984 are disordered; sequence PNKGDIVFDN…KGKDGKETKK (61 aa). The span at 1933–1956 shows a compositional bias: polar residues; the sequence is NVNSSSPEKTDATASTISPPSYDS. A compositionally biased stretch (basic and acidic residues) spans 1958–1984; the sequence is TKPDKEKYEKDKTEKEDKGKDGKETKK.

This sequence belongs to the sodium channel (TC 1.A.1.10) family. Nav1.7/SCN9A subfamily. In terms of assembly, the Nav1.7 voltage-gated sodium channel consists of an ion-conducting alpha subunit SCN9A which is functional on its own regulated by one or more beta-1 (SCN1B), beta-2 (SCN2B), beta-3 (SCN3B) and beta-4 (SCN4B) subunits. SCN1B and SCN3B are non-covalently associated with SCN9A. SCN2B and SCN4B are disulfide-linked to SCN9A. SCN1B regulates channel inactivation. Interacts with NEDD4 and NEDD4L; regulates Nav1.7 activity most probably through ubiquitination and subsequent endocytosis. Interacts with TMEM233; modulates the gating properties of NaV1.7. Phosphorylation at Ser-1487 by PKC in a highly conserved cytoplasmic loop increases peak sodium currents. Post-translationally, ubiquitinated by NEDD4L; which may promote its endocytosis. In terms of tissue distribution, expressed in the sciatic nerve, spinal cord, brainstem, cerebellum and cortex, but not expressed in the lung, skeletal and cardiac muscles, kidney and liver.

It is found in the cell membrane. It localises to the cell projection. The protein localises to the neuron projection. Its subcellular location is the axon. The enzyme catalyses Na(+)(in) = Na(+)(out). Its function is as follows. Pore-forming subunit of Nav1.7, a voltage-gated sodium (Nav) channel that directly mediates the depolarizing phase of action potentials in excitable membranes. Navs, also called VGSCs (voltage-gated sodium channels) or VDSCs (voltage-dependent sodium channels), operate by switching between closed and open conformations depending on the voltage difference across the membrane. In the open conformation they allow Na(+) ions to selectively pass through the pore, along their electrochemical gradient. The influx of Na(+) ions provokes membrane depolarization, initiating the propagation of electrical signals throughout cells and tissues. Nav1.7 plays a crucial role in controlling the excitability and action potential propagation from nociceptor neurons, thereby contributing to the sensory perception of pain. The protein is Sodium channel protein type 9 subunit alpha of Oryctolagus cuniculus (Rabbit).